Reading from the N-terminus, the 604-residue chain is Beta-(1--&gt;2)glucan export ATP-binding/permease protein NdvA (604 aa).

One can recognise an ABC transmembrane type-1 domain in the interval 21–311; sequence GWILAFANLL…VVSFINSVFM (291 aa). Helical transmembrane passes span 22–42, 68–88, 146–166, 168–188, 238–258, and 285–305; these read WILAFANLLLAGAQFAEPVLF, LLGAWVAFGLFTILCSAAVAL, EHFAAILSLVVLLPLALYINW, LAILLFILCVVFTVLTTLVVH, LLALQMPVLSWWALVTVITRA, and IVMFVSFATLLIQKLEQVVSF. An ABC transporter domain is found at 345 to 579; the sequence is VEFKDVSFSY…QGHFAALARA (235 aa). 378–385 contacts ATP; sequence GATGAGKS.

This sequence belongs to the ABC transporter superfamily. Beta-(1--&gt;2)glucan exporter (TC 3.A.1.108.1) family. As to quaternary structure, homodimer.

It localises to the cell inner membrane. It catalyses the reaction [(1-&gt;2)-beta-D-glucosyl](n)(in) + ATP + H2O = [(1-&gt;2)-beta-D-glucosyl](n)(out) + ADP + phosphate + H(+). Its function is as follows. Involved in beta-(1--&gt;2)glucan export. Transmembrane domains (TMD) form a pore in the inner membrane and the ATP-binding domain (NBD) is responsible for energy generation. The chain is Beta-(1--&gt;2)glucan export ATP-binding/permease protein NdvA from Rhodopseudomonas palustris (strain BisB18).